The primary structure comprises 101 residues: Putative pterin-4-alpha-carbinolamine dehydratase (101 aa).

Belongs to the pterin-4-alpha-carbinolamine dehydratase family.

It catalyses the reaction (4aS,6R)-4a-hydroxy-L-erythro-5,6,7,8-tetrahydrobiopterin = (6R)-L-erythro-6,7-dihydrobiopterin + H2O. In Ralstonia nicotianae (strain ATCC BAA-1114 / GMI1000) (Ralstonia solanacearum), this protein is Putative pterin-4-alpha-carbinolamine dehydratase (phhB).